The following is a 78-amino-acid chain: Defensin-like protein 281 (78 aa).

An N-terminal signal peptide occupies residues 1 to 23 (MASTKYLVLLFICLSVLLTPGLG). 3 disulfides stabilise this stretch: Cys-37–Cys-60, Cys-46–Cys-72, and Cys-50–Cys-74.

The protein belongs to the DEFL family.

It is found in the secreted. The sequence is that of Defensin-like protein 281 from Arabidopsis thaliana (Mouse-ear cress).